Consider the following 667-residue polypeptide: Chaperone protein DnaK (667 aa).

T196 carries the post-translational modification Phosphothreonine; by autocatalysis. Disordered stretches follow at residues 495-525 (EANS…RKER) and 595-667 (AGEE…GDDE). The span at 506–525 (EKMKEEAEQHAEEDERRKER) shows a compositional bias: basic and acidic residues. The segment covering 595 to 612 (AGEEIREAQQQQAQQGAA) has biased composition (low complexity). The segment covering 630 to 641 (GPAGGPTGGPAS) has biased composition (gly residues). The segment covering 647–667 (DSDEEDVQDADYEVVDEGDDE) has biased composition (acidic residues).

This sequence belongs to the heat shock protein 70 family.

In terms of biological role, acts as a chaperone. This Salinibacter ruber (strain DSM 13855 / M31) protein is Chaperone protein DnaK.